Reading from the N-terminus, the 633-residue chain is DNA topoisomerase 1 (633 aa).

One can recognise a Toprim domain in the interval 6–115 (KKYIVVESPA…KNRIVFSEIT (110 aa)). Positions 12 and 84 each coordinate Mg(2+). Positions 130-543 (DMKKVRAQLA…EFYESFSSVF (414 aa)) constitute a Topo IA-type catalytic domain. Residues 164–169 (SAGRVQ) are interaction with DNA. Tyr-288 serves as the catalytic O-(5'-phospho-DNA)-tyrosine intermediate. 2 cysteine pairs are disulfide-bonded: Cys-559/Cys-578 and Cys-561/Cys-580. The C4-type zinc-finger motif lies at 559–580 (CSCGKEMRLSFGKYGFYLKCEC). The interval 601–633 (LGRKDSESGSPDGRSVEGKGNLSEKRRKGKKGS) is disordered.

The protein belongs to the type IA topoisomerase family. In terms of assembly, monomer. The cofactor is Mg(2+).

It catalyses the reaction ATP-independent breakage of single-stranded DNA, followed by passage and rejoining.. Releases the supercoiling and torsional tension of DNA, which is introduced during the DNA replication and transcription, by transiently cleaving and rejoining one strand of the DNA duplex. Introduces a single-strand break via transesterification at a target site in duplex DNA. The scissile phosphodiester is attacked by the catalytic tyrosine of the enzyme, resulting in the formation of a DNA-(5'-phosphotyrosyl)-enzyme intermediate and the expulsion of a 3'-OH DNA strand. The free DNA strand then undergoes passage around the unbroken strand, thus removing DNA supercoils. Finally, in the religation step, the DNA 3'-OH attacks the covalent intermediate to expel the active-site tyrosine and restore the DNA phosphodiester backbone. In Thermotoga maritima (strain ATCC 43589 / DSM 3109 / JCM 10099 / NBRC 100826 / MSB8), this protein is DNA topoisomerase 1.